The chain runs to 142 residues: Ribosome maturation factor RimP (142 aa).

The protein belongs to the RimP family.

The protein localises to the cytoplasm. Its function is as follows. Required for maturation of 30S ribosomal subunits. The polypeptide is Ribosome maturation factor RimP (Nitratiruptor sp. (strain SB155-2)).